The primary structure comprises 166 residues: MYIDTAELCDIYLDQIDVVEPIFSSFGGKSTFFGKITTIKCFENNGLISEILEENGEGRVLLIDGGGAVRRALIDANLAQLAADNGWEGIIVYGAIRQLQQLENINIGIQALAPIPVGSDEQSIGETDVPVNFGGVTFFPDDYIYADLTGIILSQEPLDLEEFDSL.

This sequence belongs to the RraA family. In terms of assembly, homotrimer. Binds to both RNA-binding sites in the C-terminal region of Rne and to RhlB.

The protein localises to the cytoplasm. Globally modulates RNA abundance by binding to RNase E (Rne) and regulating its endonucleolytic activity. Can modulate Rne action in a substrate-dependent manner by altering the composition of the degradosome. Modulates RNA-binding and helicase activities of the degradosome. The chain is Regulator of ribonuclease activity A from Histophilus somni (strain 2336) (Haemophilus somnus).